A 434-amino-acid chain; its full sequence is Asparagine--tRNA ligase (434 aa).

This sequence belongs to the class-II aminoacyl-tRNA synthetase family.

Its subcellular location is the cytoplasm. The enzyme catalyses tRNA(Asn) + L-asparagine + ATP = L-asparaginyl-tRNA(Asn) + AMP + diphosphate + H(+). The chain is Asparagine--tRNA ligase from Pyrococcus horikoshii (strain ATCC 700860 / DSM 12428 / JCM 9974 / NBRC 100139 / OT-3).